Reading from the N-terminus, the 187-residue chain is Auxin-binding protein T92 (187 aa).

A signal peptide spans 1 to 20 (MARHIIILVAVFWFATAEAS). C22 and C177 are joined by a disulfide. Residues H78, H80, and E84 each contribute to the Zn(2+) site. N-linked (GlcNAc...) asparagine glycosylation occurs at N117. H128 provides a ligand contact to Zn(2+). Positions 184-187 (KDEL) match the Prevents secretion from ER motif.

In terms of assembly, homodimer.

It localises to the endoplasmic reticulum lumen. In terms of biological role, this is probably a receptor for the plant hormone auxin. This Nicotiana tabacum (Common tobacco) protein is Auxin-binding protein T92 (T92).